Reading from the N-terminus, the 341-residue chain is Binder of USO1 and GRH1 protein 1 (341 aa).

The disordered stretch occupies residues 1–181 (MSEQESDEVK…AADDLFANDG (181 aa)). Ser2 bears the N-acetylserine mark. Positions 2–41 (SEQESDEVKRMKQLEEARKRVEELKKKKNKKNKGKKNKNS) form a coiled coil. Basic and acidic residues predominate over residues 7–26 (DEVKRMKQLEEARKRVEELK). Residues 27-39 (KKKNKKNKGKKNK) are compositionally biased toward basic residues. Polar residues predominate over residues 69 to 78 (KANSTKSENN). The segment covering 79–91 (DQNDVDEESEEKE) has biased composition (acidic residues). The residue at position 87 (Ser87) is a Phosphoserine. Residues 118–132 (GKDDAENTKKEEVQE) show a composition bias toward basic and acidic residues. Over residues 158-171 (VQTQEGNEPSNTSE) the composition is skewed to polar residues. The residue at position 170 (Ser170) is a Phosphoserine. Residues 188-272 (LTTIKKQKEE…LKLAEAKAAR (85 aa)) adopt a coiled-coil conformation. Thr292 is subject to Phosphothreonine.

Interacts with GRH1 (via C-terminus), probably forming a heterooligomer consisting of a GRH1 dimer and a BUG1 dimer.

It is found in the cytoplasm. It localises to the golgi apparatus. Its subcellular location is the cis-Golgi network membrane. Its function is as follows. Involved in ER to Golgi vesicle-mediated transport by either facilitating USO1-dependent and -independent tethering or increasing target accuracy of fusion events of COPII-coated vesicles. This is Binder of USO1 and GRH1 protein 1 from Saccharomyces cerevisiae (strain ATCC 204508 / S288c) (Baker's yeast).